Reading from the N-terminus, the 183-residue chain is Threonylcarbamoyl-AMP synthase (183 aa).

The region spanning 1–183 (MNREQIAEAL…LRTNQLFRQG (183 aa)) is the YrdC-like domain.

Belongs to the SUA5 family. TsaC subfamily.

It localises to the cytoplasm. The enzyme catalyses L-threonine + hydrogencarbonate + ATP = L-threonylcarbamoyladenylate + diphosphate + H2O. Functionally, required for the formation of a threonylcarbamoyl group on adenosine at position 37 (t(6)A37) in tRNAs that read codons beginning with adenine. Catalyzes the conversion of L-threonine, HCO(3)(-)/CO(2) and ATP to give threonylcarbamoyl-AMP (TC-AMP) as the acyladenylate intermediate, with the release of diphosphate. The chain is Threonylcarbamoyl-AMP synthase from Haemophilus influenzae (strain 86-028NP).